The primary structure comprises 402 residues: Multidrug resistance protein MdtH (402 aa).

Over 1-12 the chain is Cytoplasmic; that stretch reads MSRVSQARNLGK. A helical membrane pass occupies residues 13 to 33; sequence YFLLIDNMLVVLGFFVVFPLI. Residues 34–98 are Periplasmic-facing; that stretch reads SIRFVDQMGW…GFATMGIAHE (65 aa). Residues 99–116 form a helical membrane-spanning segment; that stretch reads PWLLWFSCLLSGLGGTLF. Residues 117–138 are Cytoplasmic-facing; it reads DPPRSALVVKLIRPQQRGRFFS. The helical transmembrane segment at 139-159 threads the bilayer; the sequence is LLMMQDSAGAVIGALLGSWLL. At 160 to 164 the chain is on the periplasmic side; the sequence is QYDFR. Residues 165-185 form a helical membrane-spanning segment; it reads LVCATGAVLFVLCAAFNAWLL. Over 186-213 the chain is Cytoplasmic; the sequence is PAWKLSTVRTPVREGMTRVMRDKRFVTY. A helical transmembrane segment spans residues 214–234; the sequence is VLTLAGYYMLAVQVMLMLPIM. At 235–243 the chain is on the periplasmic side; it reads VNDVAGAPS. A helical transmembrane segment spans residues 244 to 264; sequence AVKWMYAIEACLSLTLLYPIA. Topologically, residues 265–276 are cytoplasmic; the sequence is RWSEKHFRLEHR. The chain crosses the membrane as a helical span at residues 277–297; that stretch reads LMAGLLIMSLSMMPVGMVSGL. Topologically, residues 298–299 are periplasmic; sequence QQ. A helical membrane pass occupies residues 300–320; the sequence is LFTLICLFYIGSIIAEPARET. The Cytoplasmic portion of the chain corresponds to 321–339; it reads LSASLADARARGSYMGFSR. A helical membrane pass occupies residues 340 to 360; the sequence is LGLAIGGAIGYIGGGWLFDLG. Over 361-367 the chain is Periplasmic; sequence KSAHQPE. A helical transmembrane segment spans residues 368–388; sequence LPWMMLGIIGIFTFLALGWQF. Residues 389–402 lie on the Cytoplasmic side of the membrane; it reads SQKRAARRLLERDA.

It belongs to the major facilitator superfamily. DHA1 family. MdtH (TC 2.A.1.2.21) subfamily.

It localises to the cell inner membrane. In terms of biological role, confers resistance to norfloxacin and enoxacin. The chain is Multidrug resistance protein MdtH from Escherichia coli O139:H28 (strain E24377A / ETEC).